Consider the following 718-residue polypeptide: Polyribonucleotide nucleotidyltransferase (718 aa).

Positions 497 and 503 each coordinate Mg(2+). Residues 564 to 623 form the KH domain; the sequence is PRLLTMKIDPEQIGLVIGPGGKTIKGITEQTGSKIDIADDGTVTIAALEAEKAEKAKQII. Residues 633 to 701 form the S1 motif domain; it reads GEVYMGRVTR…AKGRLNLTRL (69 aa).

The protein belongs to the polyribonucleotide nucleotidyltransferase family. Mg(2+) is required as a cofactor.

It is found in the cytoplasm. The enzyme catalyses RNA(n+1) + phosphate = RNA(n) + a ribonucleoside 5'-diphosphate. In terms of biological role, involved in mRNA degradation. Catalyzes the phosphorolysis of single-stranded polyribonucleotides processively in the 3'- to 5'-direction. This chain is Polyribonucleotide nucleotidyltransferase, found in Rippkaea orientalis (strain PCC 8801 / RF-1) (Cyanothece sp. (strain PCC 8801)).